A 126-amino-acid polypeptide reads, in one-letter code: Aspartate 1-decarboxylase (126 aa).

Ser-25 functions as the Schiff-base intermediate with substrate; via pyruvic acid in the catalytic mechanism. Position 25 is a pyruvic acid (Ser) (Ser-25). Thr-57 lines the substrate pocket. Tyr-58 acts as the Proton donor in catalysis. Substrate is bound at residue 73 to 75; that stretch reads GAA.

The protein belongs to the PanD family. In terms of assembly, heterooctamer of four alpha and four beta subunits. It depends on pyruvate as a cofactor. Post-translationally, is synthesized initially as an inactive proenzyme, which is activated by self-cleavage at a specific serine bond to produce a beta-subunit with a hydroxyl group at its C-terminus and an alpha-subunit with a pyruvoyl group at its N-terminus.

Its subcellular location is the cytoplasm. The enzyme catalyses L-aspartate + H(+) = beta-alanine + CO2. Its pathway is cofactor biosynthesis; (R)-pantothenate biosynthesis; beta-alanine from L-aspartate: step 1/1. Its function is as follows. Catalyzes the pyruvoyl-dependent decarboxylation of aspartate to produce beta-alanine. The protein is Aspartate 1-decarboxylase of Tolumonas auensis (strain DSM 9187 / NBRC 110442 / TA 4).